Reading from the N-terminus, the 122-residue chain is Large ribosomal subunit protein uL14 (122 aa).

This sequence belongs to the universal ribosomal protein uL14 family. Part of the 50S ribosomal subunit. Forms a cluster with proteins L3 and L19. In the 70S ribosome, L14 and L19 interact and together make contacts with the 16S rRNA in bridges B5 and B8.

In terms of biological role, binds to 23S rRNA. Forms part of two intersubunit bridges in the 70S ribosome. The chain is Large ribosomal subunit protein uL14 from Acinetobacter baylyi (strain ATCC 33305 / BD413 / ADP1).